We begin with the raw amino-acid sequence, 244 residues long: tRNA (guanine-N(1)-)-methyltransferase (244 aa).

S-adenosyl-L-methionine contacts are provided by residues glycine 111 and 130 to 135 (IGDYVL).

It belongs to the RNA methyltransferase TrmD family. Homodimer.

It is found in the cytoplasm. It catalyses the reaction guanosine(37) in tRNA + S-adenosyl-L-methionine = N(1)-methylguanosine(37) in tRNA + S-adenosyl-L-homocysteine + H(+). Its function is as follows. Specifically methylates guanosine-37 in various tRNAs. The chain is tRNA (guanine-N(1)-)-methyltransferase from Phytoplasma australiense.